A 67-amino-acid chain; its full sequence is Large ribosomal subunit protein uL29 (67 aa).

Belongs to the universal ribosomal protein uL29 family.

This Thermus thermophilus protein is Large ribosomal subunit protein uL29 (rpmC).